The primary structure comprises 591 residues: Protein NRT1/ PTR FAMILY 1.1 (591 aa).

11 helical membrane-spanning segments follow: residues 68-88 (TVLFMWVAATNFMPLVGAFLS), 98-118 (IVIASLSSLLGMVVLWLTAML), 139-159 (SSQLALLYTAFALISIGSGGI), 186-206 (FFGWYYASSSVAVLIAFTVIV), 216-236 (IGFGIPAILMLLAGFLFVFAS), 329-349 (LKALVKVIPVWSTGIMMSINV), 374-394 (IPAGSFGMFTIIALISWVVLY), 418-438 (MGLGLFISFLAMAVSATVEHY), 460-480 (AMWLVPQYVLHGLAEALTGIG), 496-516 (IAASLFGLGMAVANILASVIL), and 543-563 (YYWVLAILSFVNVIYYVVCSW).

It belongs to the major facilitator superfamily. Proton-dependent oligopeptide transporter (POT/PTR) (TC 2.A.17) family. As to expression, expressed in siliques, shoots and roots. Mainly detected in larger expanded leaves, in the companion cells of major veins.

Its subcellular location is the cell membrane. Its function is as follows. Low-affinity nitrate transporter involved in xylem-to-phloem transfer for redistributing nitrate into developing leaves. Not involved in dipeptides transport. This Arabidopsis thaliana (Mouse-ear cress) protein is Protein NRT1/ PTR FAMILY 1.1 (NPF1.1).